Here is a 661-residue protein sequence, read N- to C-terminus: UvrABC system protein B (661 aa).

One can recognise a Helicase ATP-binding domain in the interval 26–181; sequence KGIQEGRKHQ…LLRKLVDIQY (156 aa). 39 to 46 lines the ATP pocket; that stretch reads GATGTGKT. Positions 92–115 match the Beta-hairpin motif; the sequence is YYDYYQPEAYVPQTDTFIEKDASI. Positions 430–596 constitute a Helicase C-terminal domain; it reads QIDDLIGEIQ…TINKEIRDVI (167 aa). The UVR domain maps to 625–660; it reads QKVVEQMEHEMKEAARALDFERAAELRDLLLELKAE.

Belongs to the UvrB family. As to quaternary structure, forms a heterotetramer with UvrA during the search for lesions. Interacts with UvrC in an incision complex.

Its subcellular location is the cytoplasm. The UvrABC repair system catalyzes the recognition and processing of DNA lesions. A damage recognition complex composed of 2 UvrA and 2 UvrB subunits scans DNA for abnormalities. Upon binding of the UvrA(2)B(2) complex to a putative damaged site, the DNA wraps around one UvrB monomer. DNA wrap is dependent on ATP binding by UvrB and probably causes local melting of the DNA helix, facilitating insertion of UvrB beta-hairpin between the DNA strands. Then UvrB probes one DNA strand for the presence of a lesion. If a lesion is found the UvrA subunits dissociate and the UvrB-DNA preincision complex is formed. This complex is subsequently bound by UvrC and the second UvrB is released. If no lesion is found, the DNA wraps around the other UvrB subunit that will check the other stand for damage. The chain is UvrABC system protein B from Bacillus velezensis (strain DSM 23117 / BGSC 10A6 / LMG 26770 / FZB42) (Bacillus amyloliquefaciens subsp. plantarum).